Reading from the N-terminus, the 105-residue chain is Small ribosomal subunit protein uS10c (105 aa).

The protein belongs to the universal ribosomal protein uS10 family. Part of the 30S ribosomal subunit.

The protein resides in the plastid. It is found in the chloroplast. In terms of biological role, involved in the binding of tRNA to the ribosomes. The protein is Small ribosomal subunit protein uS10c of Gracilaria tenuistipitata var. liui (Red alga).